The primary structure comprises 321 residues: Chloroplastic calcium uniporter protein (321 aa).

A chloroplast-targeting transit peptide spans 1–56; sequence MSSKKSLVQSLFNISKTYSRISGLTRMRPTKSGGIPPDAGDSGIRRRFLHKRAFFS. 2 helical membrane passes run 223–243 and 249–269; these read LWAGLGLIMAQTVGFFRLTFW and VMEPICFYVTSTYFMAGYAFF. The Selectivity filter signature appears at 247–255; that stretch reads WDVMEPICF. E251 serves as a coordination point for Ca(2+).

The protein belongs to the MCU (TC 1.A.77) family.

It localises to the plastid. Its subcellular location is the chloroplast membrane. It catalyses the reaction Ca(2+)(in) = Ca(2+)(out). Its function is as follows. Chloroplastic membrane calcium uniporter that mediates calcium uptake into chloroplast stroma. Constitutes a pore-forming and calcium-conducting subunit. Chloroplastic calcium homeostasis plays key roles in cellular physiology. Promotes calcium uptake into chloroplast stroma in response to osmotic-stress, fine-tuning cytosolic MAPK3/MAPK6 phosphorylation and affecting stomata opening. This is Chloroplastic calcium uniporter protein from Arabidopsis thaliana (Mouse-ear cress).